The sequence spans 72 residues: Gas vesicle protein A (72 aa).

Belongs to the gas vesicle GvpA family. As to quaternary structure, the gas vesicle shell is 2 nm thick and consists of a single layer of this protein. It forms helical ribs nearly perpendicular to the long axis of the vesicle.

The protein resides in the gas vesicle shell. Functionally, gas vesicles are hollow, gas filled proteinaceous nanostructures found in some microorganisms. During planktonic growth they allow positioning of the organism at a favorable depth for light or nutrient acquisition. GvpA forms the protein shell. The protein is Gas vesicle protein A of Haloquadratum walsbyi (strain DSM 16790 / HBSQ001).